The sequence spans 501 residues: 2,3-bisphosphoglycerate-independent phosphoglycerate mutase (501 aa).

Mn(2+) contacts are provided by Asp12 and Ser62. The Phosphoserine intermediate role is filled by Ser62. Substrate is bound by residues His121, 150 to 151, Arg182, Arg188, 253 to 256, and Lys322; these read RD and RSDR. The Mn(2+) site is built by Asp389, His393, Asp430, His431, and His449.

This sequence belongs to the BPG-independent phosphoglycerate mutase family. In terms of assembly, monomer. Mn(2+) is required as a cofactor.

It catalyses the reaction (2R)-2-phosphoglycerate = (2R)-3-phosphoglycerate. The protein operates within carbohydrate degradation; glycolysis; pyruvate from D-glyceraldehyde 3-phosphate: step 3/5. Catalyzes the interconversion of 2-phosphoglycerate and 3-phosphoglycerate. The protein is 2,3-bisphosphoglycerate-independent phosphoglycerate mutase of Ehrlichia ruminantium (strain Welgevonden).